Reading from the N-terminus, the 79-residue chain is Sec-independent protein translocase protein TatA (79 aa).

A helical transmembrane segment spans residues Met1–Gly21. The tract at residues Ala42–Ala79 is disordered. Over residues Asp57 to Gln66 the composition is skewed to polar residues. A compositionally biased stretch (basic and acidic residues) spans Ala67 to Ala79.

It belongs to the TatA/E family. As to quaternary structure, the Tat system comprises two distinct complexes: a TatABC complex, containing multiple copies of TatA, TatB and TatC subunits, and a separate TatA complex, containing only TatA subunits. Substrates initially bind to the TatABC complex, which probably triggers association of the separate TatA complex to form the active translocon.

It localises to the cell inner membrane. Functionally, part of the twin-arginine translocation (Tat) system that transports large folded proteins containing a characteristic twin-arginine motif in their signal peptide across membranes. TatA could form the protein-conducting channel of the Tat system. This Shewanella denitrificans (strain OS217 / ATCC BAA-1090 / DSM 15013) protein is Sec-independent protein translocase protein TatA.